The chain runs to 947 residues: Cell adhesion molecule CEACAM5 (947 aa).

Residues 1–34 (MEASSVLPCKWCTHLQGLLLTASFLTCCHLPTTA) form the signal peptide. 7 Ig-like V-type domains span residues 35–132 (QITI…EIVS), 166–259 (SEGG…VQLY), 270–378 (PLQV…LHVN), 392–498 (RLSI…LQLD), 509–615 (QVKI…LHVN), 642–733 (GESV…VQLQ), and 746–851 (DQLI…VQVH). Residues asparagine 57, asparagine 103, asparagine 110, asparagine 207, asparagine 224, asparagine 341, asparagine 461, asparagine 472, asparagine 578, asparagine 698, asparagine 709, asparagine 816, and asparagine 823 are each glycosylated (N-linked (GlcNAc...) asparagine). The Ig-like C2-type 1 domain maps to 859 to 943 (PFVRVTDTTV…SKSSLPVRLA (85 aa)). A disulfide bridge links cysteine 878 with cysteine 926.

The protein belongs to the immunoglobulin superfamily. CEA family. As to quaternary structure, homodimer.

It localises to the cell membrane. The protein resides in the apical cell membrane. The protein localises to the cell surface. Functionally, cell surface glycoprotein that plays a role in cell adhesion, intracellular signaling and tumor progression. Mediates homophilic and heterophilic cell adhesion with other carcinoembryonic antigen-related cell adhesion molecules, such as CEACAM6. Plays a role as an oncogene by promoting tumor progression; induces resistance to anoikis of colorectal carcinoma cells. In Mus musculus (Mouse), this protein is Cell adhesion molecule CEACAM5.